Reading from the N-terminus, the 849-residue chain is Neprilysin-1 (849 aa).

Over 1–113 (MSQQHEATAA…LKESQQRRRL (113 aa)) the chain is Cytoplasmic. The segment covering 41–61 (QQQVQHQAPHQMQQQQQQQQQ) has biased composition (low complexity). A disordered region spans residues 41 to 63 (QQQVQHQAPHQMQQQQQQQQQNK). Residues 114–134 (LVLAIAFTVLGAAIGALAIYF) form a helical; Signal-anchor for type II membrane protein membrane-spanning segment. Residues 135–849 (ASVHQRCHLY…MNPAEKCSVW (715 aa)) are Extracellular-facing. Basic and acidic residues predominate over residues 146-155 (LEPDNDDRPN). The disordered stretch occupies residues 146-167 (LEPDNDDRPNGRWNQDSGSAHE). The Peptidase M13 domain occupies 172 to 849 (ICMTQECVRT…MNPAEKCSVW (678 aa)). Disulfide bonds link cysteine 173–cysteine 178, cysteine 196–cysteine 834, cysteine 204–cysteine 794, cysteine 260–cysteine 512, and cysteine 721–cysteine 846. N-linked (GlcNAc...) asparagine glycans are attached at residues asparagine 309, asparagine 326, asparagine 393, asparagine 589, and asparagine 599. Histidine 684 lines the Zn(2+) pocket. Glutamate 685 is a catalytic residue. Histidine 688 serves as a coordination point for Zn(2+). Asparagine 709 carries N-linked (GlcNAc...) asparagine glycosylation. Position 746 (glutamate 746) interacts with Zn(2+). Residue aspartate 750 is the Proton donor of the active site. A glycan (N-linked (GlcNAc...) asparagine) is linked at asparagine 778.

The protein belongs to the peptidase M13 family. Zn(2+) serves as cofactor. As to expression, expressed in the testicular tube, near and in the seminal vesicles. In adults and third-instar larvae, expressed in the midgut and in the mushroom bodies of the brain and neurons in the pars intercerebralis. Also expressed in neurons of the ventral ganglion and imaginal disks (wing and leg) of third-instar larvae. In stage 17 embryos, expressed in the peripheral nervous system, pharynx and midgut.

It localises to the cell membrane. The catalysed reaction is Preferential cleavage of polypeptides between hydrophobic residues, particularly with Phe or Tyr at P1'.. Its function is as follows. Metalloendoprotease which functions in fertility and memory formation. Required in the dorsal paired medial neurons and alpha/beta mushroom body neurons for the proper formation of long-term and middle-term memories. Required in males to maximise egg-laying in female mates and is also required in females for their fertility. This is Neprilysin-1 from Drosophila melanogaster (Fruit fly).